A 605-amino-acid polypeptide reads, in one-letter code: Adenine deaminase (605 aa).

Belongs to the metallo-dependent hydrolases superfamily. Adenine deaminase family. The cofactor is Mn(2+).

It carries out the reaction adenine + H2O + H(+) = hypoxanthine + NH4(+). This Mesorhizobium japonicum (strain LMG 29417 / CECT 9101 / MAFF 303099) (Mesorhizobium loti (strain MAFF 303099)) protein is Adenine deaminase.